The primary structure comprises 238 residues: ATP synthase subunit a (238 aa).

Helical transmembrane passes span 18 to 38, 76 to 96, 117 to 137, 173 to 193, and 208 to 230; these read GTTM…TVIG, FIVL…MGIP, VLTL…GIMV, LFGN…LGTT, and WQAF…AMVY.

This sequence belongs to the ATPase A chain family. As to quaternary structure, F-type ATPases have 2 components, CF(1) - the catalytic core - and CF(0) - the membrane proton channel. CF(1) has five subunits: alpha(3), beta(3), gamma(1), delta(1), epsilon(1). CF(0) has three main subunits: a(1), b(2) and c(9-12). The alpha and beta chains form an alternating ring which encloses part of the gamma chain. CF(1) is attached to CF(0) by a central stalk formed by the gamma and epsilon chains, while a peripheral stalk is formed by the delta and b chains.

The protein resides in the cell membrane. Key component of the proton channel; it plays a direct role in the translocation of protons across the membrane. In Shouchella clausii (strain KSM-K16) (Alkalihalobacillus clausii), this protein is ATP synthase subunit a.